The primary structure comprises 82 residues: uncharacterized protein (82 aa).

In terms of biological role, could be a silencing control element for the regulation of the restriction system. This is an uncharacterized protein from Herpetosiphon aurantiacus (Herpetosiphon giganteus).